The sequence spans 273 residues: Probable NAD(P)H dehydrogenase (quinone) FQR1-like 2 (273 aa).

The disordered stretch occupies residues Met-1 to Pro-60. The span at Thr-49 to Pro-60 shows a compositional bias: low complexity. The region spanning Ile-75 to Met-263 is the Flavodoxin-like domain. FMN is bound by residues Ser-81–His-85, Phe-183–Gly-236, and His-207. Tyr-83 serves as a coordination point for NAD(+).

It belongs to the WrbA family. Requires FMN as cofactor.

Its subcellular location is the cell membrane. It carries out the reaction a quinone + NADH + H(+) = a quinol + NAD(+). The catalysed reaction is a quinone + NADPH + H(+) = a quinol + NADP(+). Catalyzes the transfer of electrons from NADH and NADPH to reduce quinone to the hydroquinone state. The chain is Probable NAD(P)H dehydrogenase (quinone) FQR1-like 2 from Arabidopsis thaliana (Mouse-ear cress).